We begin with the raw amino-acid sequence, 395 residues long: MNQTWRTHLQSKLQQLHERGQYRNLHVTEQAEETWLIRDEKRMLNLASNNYLGLAGDERLKEAAIACTRKYGTGATASRLVVGNYSLYEEVERSICDWKGTEKALVVNSGYTANIGVISSLVSRHDIVFSDKLNHASIVDGIILSGAEHKRYRHNDLDHLEKLLKTASPEQRKLIVTDTVFSMDGDTAYVRELVELKEKYGAILIVDEAHASGIYGSGGAGLSHIEEDLAQKIDIHMGTFSKALGCYGAYLTGDAIYIEYLHNMMRSFIFTTALPPGTLGAVQKAIEIVKEDNERRERLIENGAYFRNHLREAGFDIGNSSTHIVPIVVGSNETALRFSKRLQQVGIAAIAIRPPTVPVNSSRVRFAVTSQHTIADLQWAIHHIIRIGKEEGFFV.

R23 is a binding site for substrate. 110 to 111 (GY) contributes to the pyridoxal 5'-phosphate binding site. H135 is a binding site for substrate. Pyridoxal 5'-phosphate contacts are provided by residues S182, 207 to 210 (DEAH), and 239 to 242 (TFSK). K242 carries the N6-(pyridoxal phosphate)lysine modification. T356 is a binding site for substrate.

It belongs to the class-II pyridoxal-phosphate-dependent aminotransferase family. BioF subfamily. As to quaternary structure, homodimer. Pyridoxal 5'-phosphate serves as cofactor.

The catalysed reaction is 6-carboxyhexanoyl-[ACP] + L-alanine + H(+) = (8S)-8-amino-7-oxononanoate + holo-[ACP] + CO2. It participates in cofactor biosynthesis; biotin biosynthesis. In terms of biological role, catalyzes the decarboxylative condensation of pimeloyl-[acyl-carrier protein] and L-alanine to produce 8-amino-7-oxononanoate (AON), [acyl-carrier protein], and carbon dioxide. The chain is Putative 8-amino-7-oxononanoate synthase (bioF) from Bacillus cereus (strain ATCC 10987 / NRS 248).